The chain runs to 260 residues: Indole-3-glycerol phosphate synthase (260 aa).

The protein belongs to the TrpC family.

The catalysed reaction is 1-(2-carboxyphenylamino)-1-deoxy-D-ribulose 5-phosphate + H(+) = (1S,2R)-1-C-(indol-3-yl)glycerol 3-phosphate + CO2 + H2O. The protein operates within amino-acid biosynthesis; L-tryptophan biosynthesis; L-tryptophan from chorismate: step 4/5. The chain is Indole-3-glycerol phosphate synthase from Neisseria meningitidis serogroup C / serotype 2a (strain ATCC 700532 / DSM 15464 / FAM18).